Reading from the N-terminus, the 153-residue chain is General odorant-binding protein lush (153 aa).

Residues 1-29 (MKHWKRRSSAVFAIVLQVLVLLLPDPAVA) form the signal peptide. 3 disulfides stabilise this stretch: C46/C79, C75/C132, and C121/C141. Positions 81 and 86 each coordinate 1-propanol. Butan-1-ol-binding residues include S81 and T86. 2 residues coordinate ethanol: S81 and T86.

The protein belongs to the PBP/GOBP family. As to expression, specifically expressed in chemosensory system in both males and females. Expressed in a subset of trichoid chemosensory sensilla located on the ventral-lateral surface of the third antennal segment. Secreted from non-neuronal support cells into the sensillum lymph that bathes the olfactory neurons within these sensilla.

The protein resides in the secreted. In terms of biological role, odorant-binding protein required for olfactory behavior and for activity of pheromone-sensitive neurons. Binds to alcohols and mediates avoidance behavior to high concentrations of alcohols, the alcohol-binding possibly resulting in activation of receptors on T2B neurons, the activation of these receptors inhibiting these neurons. Acts in concert with Snmp and lush to capture cVA molecules on the surface of Or67d expressing olfactory dendrites and facilitate their transfer to the odorant-receptor Orco complex. Required for cVA response, probably by binding to VA. May act by serving as an adapter that bridges the presence of gaseous pheromone molecules, cVA, to activation of specific neuronal receptors expressed on T1 olfactory neurons, possibly via a specific conformational change induced by cVA that in turn activates T1 receptors. T1 neurons are excited by the pheromone VA, while T2 neurons are inhibited by alcohols. Also binds to phthalates. The sequence is that of General odorant-binding protein lush (lush) from Drosophila melanogaster (Fruit fly).